The following is a 181-amino-acid chain: Acireductone dioxygenase (181 aa).

Residues H91, H93, E97, and H136 each contribute to the Fe(2+) site. The Ni(2+) site is built by H91, H93, E97, and H136.

Belongs to the acireductone dioxygenase (ARD) family. In terms of assembly, monomer. Interacts with MMP14. Requires Fe(2+) as cofactor. The cofactor is Ni(2+).

The protein resides in the cytoplasm. Its subcellular location is the nucleus. It localises to the cell membrane. The catalysed reaction is 1,2-dihydroxy-5-(methylsulfanyl)pent-1-en-3-one + O2 = 4-methylsulfanyl-2-oxobutanoate + formate + 2 H(+). It catalyses the reaction 1,2-dihydroxy-5-(methylsulfanyl)pent-1-en-3-one + O2 = 3-(methylsulfanyl)propanoate + CO + formate + 2 H(+). It participates in amino-acid biosynthesis; L-methionine biosynthesis via salvage pathway; L-methionine from S-methyl-5-thio-alpha-D-ribose 1-phosphate: step 5/6. In terms of biological role, catalyzes 2 different reactions between oxygen and the acireductone 1,2-dihydroxy-3-keto-5-methylthiopentene (DHK-MTPene) depending upon the metal bound in the active site. Fe-containing acireductone dioxygenase (Fe-ARD) produces formate and 2-keto-4-methylthiobutyrate (KMTB), the alpha-ketoacid precursor of methionine in the methionine recycle pathway. Ni-containing acireductone dioxygenase (Ni-ARD) produces methylthiopropionate, carbon monoxide and formate, and does not lie on the methionine recycle pathway. This chain is Acireductone dioxygenase (adi1), found in Danio rerio (Zebrafish).